A 223-amino-acid polypeptide reads, in one-letter code: MHRINALKHLALLGALKKPVKISSSEFTRYTSTGSKTAARILKQLEEEGSIDRLIIPEGQMISITEKGHKWLESEFSDYKHIFCGDEDKVELYGNVITGLGEGQYYIAQDGYGSQFEEKLGFKPYPGTLNVRLTSHSADILKRKSQKNIIPISGFTDGQRTFGGCNCYFVEVEGVRGAVVTPERSHYPHDLLEIISPVHLRKTLELNDGDEVKIMIEDRSACE.

Positions 1-89 (MHRINALKHL…KHIFCGDEDK (89 aa)) are unknown. Positions 90–223 (VELYGNVITG…IMIEDRSACE (134 aa)) are riboflavin kinase. 99–104 (GLGEGQ) serves as a coordination point for CDP. Residues threonine 128 and asparagine 130 each coordinate Mg(2+). Serine 185 and glutamate 193 together coordinate FMN. Residue 198 to 201 (VHLR) coordinates CDP.

This sequence belongs to the archaeal riboflavin kinase family. Requires Mg(2+) as cofactor.

The catalysed reaction is riboflavin + CTP = CDP + FMN + H(+). It functions in the pathway cofactor biosynthesis; FMN biosynthesis; FMN from riboflavin (CTP route): step 1/1. Functionally, catalyzes the CTP-dependent phosphorylation of riboflavin (vitamin B2) to form flavin mononucleotide (FMN). The chain is Riboflavin kinase (ribK) from Methanococcoides burtonii (strain DSM 6242 / NBRC 107633 / OCM 468 / ACE-M).